Consider the following 674-residue polypeptide: Glutaminase kidney isoform, mitochondrial (674 aa).

A mitochondrion-targeting transit peptide spans 1-54 (MMRLRGSAMLRELLLRPPAAVGAVLRRAQPLGTLCRRPRGGSRPTAGLVAAARL). The segment at 56-123 (PWWGGGGRAK…PGETDAFGNS (68 aa)) is disordered. Residues 58–71 (WGGGGRAKGPGAGG) are compositionally biased toward gly residues. The span at 89–101 (PPQQQQQQQQQPG) shows a compositional bias: low complexity. Residues K135 and K169 each carry the N6-succinyllysine modification. S291 contacts substrate. Position 316 is an N6-acetyllysine (K316). Residues 320-327 (GLRFNKLF) form a highly mobile activation loop region. N340, E386, N393, Y419, Y471, and V489 together coordinate substrate. ANK repeat units lie at residues 590 to 619 (DSRT…VNPF) and 624 to 653 (WNNT…QYTP). Residues 652–674 (TPQGDSDDGKGNQTVHKNLDGLL) form a disordered region. At S657 the chain carries Phosphoserine.

Belongs to the glutaminase family. Homotetramer, dimer of dimers. The tetramers can assemble into rod-like oligomers (in vitro), but the physiological significance of this is not clear. Interacts with RAF1 and MAP2K2. Interacts with ATCAY; the interaction is direct and may control GLS localization, negatively regulating its activity. Post-translationally, synthesized as a 74-kDa cytosolic precursor which is proteolytically processed by the mitochondrial-processing peptidase (MPP) via a 72-kDa intermediate to yield the mature mitochondrial 68- and 65-kDa subunits.

Its subcellular location is the mitochondrion. The protein resides in the cytoplasm. The protein localises to the cytosol. It localises to the mitochondrion matrix. The catalysed reaction is L-glutamine + H2O = L-glutamate + NH4(+). With respect to regulation, isoform 1 and isoform 2 are activated by phosphate, due to increased affinity for glutamine. At phosphate concentrations above 10 mM, isoform 2 is more efficient than isoform 1. In terms of biological role, catalyzes the first reaction in the primary pathway for the renal catabolism of glutamine. Plays a role in maintaining acid-base homeostasis. Regulates the levels of the neurotransmitter glutamate, the main excitatory neurotransmitter in the brain. This is Glutaminase kidney isoform, mitochondrial (Gls) from Mus musculus (Mouse).